The chain runs to 1952 residues: Protein ROS1A (1952 aa).

4 disordered regions span residues 72 to 157, 693 to 778, 1302 to 1334, and 1367 to 1398; these read EVVG…CRSE, IIRP…ESTS, HGTS…DDNV, and LIEN…AGKK. Basic residues-rich tracts occupy residues 90-102 and 130-139; these read PARK…HRPK and GKRKYVRKKT. 2 stretches are compositionally biased toward basic and acidic residues: residues 709 to 720 and 727 to 747; these read PRTDNHQVKVSE and LPEK…EKPK. Polar residues predominate over residues 769–778; that stretch reads TNPLQNESTS. Basic residues predominate over residues 1388-1398; it reads AKRPRVGAGKK. [4Fe-4S] cluster is bound by residues Cys-1582, Cys-1589, Cys-1592, and Cys-1598.

It belongs to the DNA glycosylase family. DEMETER subfamily. [4Fe-4S] cluster is required as a cofactor. As to expression, expressed in roots, leaf blades, leaf sheaths, apical and lateral shoot meristems, inflorescence meristems, lodicules, pollen grains, ovules and seeds. Expressed in vascular tissues of roots and leaves, pollen grains, pericarp, aleurone, and starchy endosperm.

Its subcellular location is the nucleus. Its function is as follows. Bifunctional DNA glycosylase/lyase, which excises 5-methylcytosine (5-meC) and 5-hydroxymethylcytosine (5-hmeC), leaving an apyrimidinic (AP) site that is subsequently incised by the lyase activity. DNA demethylase that is indispensable in both male and female gametophyte development. Involved in the regulation of DNA methylation in the promoters of RISBZ1/BZIP58 and DOF3/RPBF, two transcription factors that functions synergistically to positively regulate genes that are key players in the development of aleurone layers. Active DNA demethylation carried out by ROS1A in rice endosperms may restrict the number of aleurone cell layers. This chain is Protein ROS1A, found in Oryza sativa subsp. japonica (Rice).